The chain runs to 337 residues: Terpene synthase 4 (337 aa).

Residues D94 and D98 each contribute to the Mg(2+) site. The D(D/E)XX(D/E) motif signature appears at 94 to 98 (DDIFD). Residue R195 coordinates substrate. Mg(2+) contacts are provided by N241, S245, and E249. Positions 241 to 249 (NDIYSYHRE) match the NSE motif motif. The short motif at 320–327 (WSESCTRY) is the WxxxxxRY motif element.

The protein belongs to the terpene synthase family. Mg(2+) serves as cofactor.

It carries out the reaction (2E,6E)-farnesyl diphosphate = alpha-muurolene + diphosphate. The enzyme catalyses (2E,6E)-farnesyl diphosphate = (-)-(E)-beta-caryophyllene + diphosphate. Terpene synthase that catalyzes the cyclization of farnesyl diphosphate (FPP) into alpha-muurolene, (-)-beta-caryophyllene, and one unidentified sesquiterpene. TPS4 shows only trace monoterpene synthase activity with geranyl diphosphate (GPP) as substrate and produces very small amounts of myrcene. P.polycephalum has a unique biology and these volatile terpenoids could function in internal communication of P.polycephalum, to mark the territory that have been explored, or they may be involved in chemotaxis. This Physarum polycephalum (Slime mold) protein is Terpene synthase 4.